The chain runs to 283 residues: Large ribosomal subunit protein uL2 (283 aa).

Disordered regions lie at residues 1-59 (MSIK…GGHK) and 222-283 (RGVA…TGGQ).

The protein belongs to the universal ribosomal protein uL2 family. In terms of assembly, part of the 50S ribosomal subunit. Forms a bridge to the 30S subunit in the 70S ribosome.

Its function is as follows. One of the primary rRNA binding proteins. Required for association of the 30S and 50S subunits to form the 70S ribosome, for tRNA binding and peptide bond formation. It has been suggested to have peptidyltransferase activity; this is somewhat controversial. Makes several contacts with the 16S rRNA in the 70S ribosome. This is Large ribosomal subunit protein uL2 from Salinibacter ruber (strain DSM 13855 / M31).